The sequence spans 166 residues: Large ribosomal subunit protein uL10 (166 aa).

This sequence belongs to the universal ribosomal protein uL10 family. In terms of assembly, part of the ribosomal stalk of the 50S ribosomal subunit. The N-terminus interacts with L11 and the large rRNA to form the base of the stalk. The C-terminus forms an elongated spine to which L12 dimers bind in a sequential fashion forming a multimeric L10(L12)X complex.

Its function is as follows. Forms part of the ribosomal stalk, playing a central role in the interaction of the ribosome with GTP-bound translation factors. The chain is Large ribosomal subunit protein uL10 from Staphylococcus epidermidis (strain ATCC 35984 / DSM 28319 / BCRC 17069 / CCUG 31568 / BM 3577 / RP62A).